The primary structure comprises 453 residues: DNA repair protein RadA (453 aa).

The segment at 10–27 (CQECGYQSPKYLGRCPNC) adopts a C4-type zinc-finger fold. 95 to 102 (GDPGIGKS) serves as a coordination point for ATP. A RadA KNRFG motif motif is present at residues 251-255 (KNRFG). Residues 350 to 453 (DAYLKSAGGV…VGQVLKAVFS (104 aa)) are lon-protease-like.

Belongs to the RecA family. RadA subfamily.

DNA-dependent ATPase involved in processing of recombination intermediates, plays a role in repairing DNA breaks. Stimulates the branch migration of RecA-mediated strand transfer reactions, allowing the 3' invading strand to extend heteroduplex DNA faster. Binds ssDNA in the presence of ADP but not other nucleotides, has ATPase activity that is stimulated by ssDNA and various branched DNA structures, but inhibited by SSB. Does not have RecA's homology-searching function. In Streptococcus pyogenes serotype M3 (strain ATCC BAA-595 / MGAS315), this protein is DNA repair protein RadA.